Here is a 140-residue protein sequence, read N- to C-terminus: MIDIQGIKEALPHRYPMLLVDRVLEVSEDTIVAIKNVTINEPFFNGHFPQYPVMPGVVIMEALAQTAGVLELSKPENKGKLVFYAGMDKVKFKKQVVPGDQLVMTATFVKRRGTIAVVEAKAEVDGKLAASGTLTFAIGN.

His47 is an active-site residue.

This sequence belongs to the thioester dehydratase family. FabZ subfamily.

It localises to the cytoplasm. It carries out the reaction a (3R)-hydroxyacyl-[ACP] = a (2E)-enoyl-[ACP] + H2O. Functionally, involved in unsaturated fatty acids biosynthesis. Catalyzes the dehydration of short chain beta-hydroxyacyl-ACPs and long chain saturated and unsaturated beta-hydroxyacyl-ACPs. This Streptococcus pneumoniae serotype 4 (strain ATCC BAA-334 / TIGR4) protein is 3-hydroxyacyl-[acyl-carrier-protein] dehydratase FabZ.